The following is a 478-amino-acid chain: Patatin-like phospholipase domain-containing protein 2 (478 aa).

Topologically, residues 1–8 (MFPRETKW) are cytoplasmic. The helical transmembrane segment at 9 to 29 (NISFAGCGFLGVYHIGVASCL) threads the bilayer. In terms of domain architecture, PNPLA spans 10–179 (ISFAGCGFLG…SDNLPLYELK (170 aa)). Residues 14–19 (GCGFLG) carry the GXGXXG motif. The Extracellular portion of the chain corresponds to 30–42 (REHAPFLVANATH). Asn39 carries an N-linked (GlcNAc...) asparagine glycan. Residues 43 to 63 (IYGASAGALTATALVTGACLG) form a helical membrane-spanning segment. The GXSXG motif lies at 45-49 (GASAG). Ser47 acts as the Nucleophile in catalysis. The Cytoplasmic segment spans residues 64-137 (EAGANIIEVS…IISHFSSKDE (74 aa)). A Glycyl lysine isopeptide (Lys-Gly) (interchain with G-Cter in ubiquitin) cross-link involves residue Lys92. Residues 138-158 (LIQANVCSTFIPVYCGLIPPT) form a helical membrane-spanning segment. The Extracellular segment spans residues 159-323 (LQGVRYVDGG…TTLSNMLPVR (165 aa)). Asp166 (proton acceptor) is an active-site residue. The DGA/G signature appears at 166–168 (DGG). A helical membrane pass occupies residues 324–344 (LATAMMVPYTLPLESAVSFTI). Topologically, residues 345–478 (RLLEWLPDVP…PQDPSGLPPC (134 aa)) are cytoplasmic. Ser366 carries the phosphoserine; in vitro modification. Position 388 is a phosphoserine; by PKA (Ser388). Phosphoserine occurs at positions 398 and 422. The interval 456 to 478 (RAPASPTATDPATPQDPSGLPPC) is disordered. Positions 457 to 478 (APASPTATDPATPQDPSGLPPC) are enriched in low complexity. Ser460 bears the Phosphoserine; in vitro mark.

Interacts with ABHD5; this association stimulates PNPLA2 triglyceride hydrolase activity. Interacts with SERPINF1; this interaction stimulates the phospholipase A2 activity of PNPLA2. Despite a colocalization in lipid droplets, it probably does not interact with PLIN. Interacts with PLIN5; prevents interaction with ABHD5. Interacts with FAF2. Phosphorylation at Ser-398 by PKA is increased during fasting and moderate intensity exercise, and moderately increases lipolytic activity. In terms of processing, ubiquitinated by PEX2 in response to reactive oxygen species (ROS), leading to its degradation. Ubiquitination is stimulated by LDAH.

The protein resides in the lipid droplet. Its subcellular location is the cell membrane. It localises to the cytoplasm. It catalyses the reaction a triacylglycerol + H2O = a diacylglycerol + a fatty acid + H(+). It carries out the reaction a triacylglycerol + H2O = a 1,2-diacylglycerol + a fatty acid + H(+). The enzyme catalyses a triacylglycerol + H2O = a 1,3-diacylglycerol + a fatty acid + H(+). The catalysed reaction is a triacyl-sn-glycerol + H2O = a 1,3-diacyl-sn-glycerol + a fatty acid + H(+). It catalyses the reaction a triacyl-sn-glycerol + H2O = a 2,3-diacyl-sn-glycerol + a fatty acid + H(+). It carries out the reaction a 1-acylglycerol + a 1,3-diacylglycerol = a triacylglycerol + glycerol. The enzyme catalyses a 1-acylglycerol + a 1,2-diacylglycerol = a triacylglycerol + glycerol. The catalysed reaction is 2 a 1-acylglycerol = a 1,2-diacylglycerol + glycerol. It catalyses the reaction a triacylglycerol + all-trans-retinol = an all-trans-retinyl ester + a diacylglycerol. It carries out the reaction 1,2-di-(9Z-octadecenoyl)-glycerol + (9Z)-octadecenoate + H(+) = 1,2,3-tri-(9Z-octadecenoyl)-glycerol + H2O. The enzyme catalyses 1,2,3-tri-(9Z-octadecenoyl)-glycerol + H2O = 1,3-di-(9Z-octadecenoyl)-glycerol + (9Z)-octadecenoate + H(+). The catalysed reaction is 1-(9Z-octadecenoyl)-glycerol + 1,3-di-(9Z-octadecenoyl)-glycerol = 1,2,3-tri-(9Z-octadecenoyl)-glycerol + glycerol. It catalyses the reaction 1-(9Z-octadecenoyl)-glycerol + 1,2-di-(9Z-octadecenoyl)-glycerol = 1,2,3-tri-(9Z-octadecenoyl)-glycerol + glycerol. It carries out the reaction 2 1-(9Z-octadecenoyl)-glycerol = 1,2-di-(9Z-octadecenoyl)-glycerol + glycerol. The enzyme catalyses 1,2,3-tri-(9Z-octadecenoyl)-glycerol + all-trans-retinol = all-trans-retinyl 9Z-octadecenoate + di-(9Z)-octadecenoylglycerol. The catalysed reaction is 1,2,3-tri-(9Z)-hexadecenoylglycerol + H2O = 1,3-di-(9Z)-hexadecenoylglycerol + (9Z)-hexadecenoate + H(+). It catalyses the reaction 1,2,3-tri-(9Z,12Z)-octadecadienoylglycerol + H2O = 1,3-di-(9Z,12Z)-octadecadienoylglycerol + (9Z,12Z)-octadecadienoate + H(+). It carries out the reaction 1,2,3-tri-(9Z,12Z,15Z)-octadecatrienoylglycerol + H2O = 1,3-di-(9Z,12Z,15Z)-octadecatrienoylglycerol + (9Z,12Z,15Z)-octadecatrienoate + H(+). The enzyme catalyses 1,3-di-(9Z)-octadecenoyl-2-hexadecanoylglycerol + H2O = 1,3-di-(9Z-octadecenoyl)-glycerol + hexadecanoate + H(+). The catalysed reaction is 1,2-di-(9Z)-octadecenoyl-3-hexadecanoyl-sn-glycerol + H2O = 1-(9Z)-octadecenoyl-3-hexadecanoyl-sn-glycerol + (9Z)-octadecenoate + H(+). It catalyses the reaction 1-hexadecanoyl-2,3-di-(9Z)-octadecenoyl-sn-glycerol + H2O = 1-hexadecanoyl-3-(9Z)-octadecenoyl-sn-glycerol + (9Z)-octadecenoate + H(+). It carries out the reaction 1,2,3-tri-(9Z-octadecenoyl)-glycerol + H2O = 2,3-di-(9Z)-octadecenoyl-sn-glycerol + (9Z)-octadecenoate + H(+). The enzyme catalyses 1,2,3-tri-(9Z)-hexadecenoylglycerol + H2O = 2,3-di-(9Z)-hexadecenoyl-sn-glycerol + (9Z)-hexadecenoate + H(+). The catalysed reaction is 1,2,3-tri-(9Z,12Z)-octadecadienoylglycerol + H2O = 2,3-di-(9Z,12Z)-octadecadienoyl-sn-glycerol + (9Z,12Z)-octadecadienoate + H(+). It catalyses the reaction 1,2,3-tri-(9Z,12Z,15Z)-octadecatrienoylglycerol + H2O = 2,3-di-(9Z,12Z,15Z)-octadecatrienoyl-sn-glycerol + (9Z,12Z,15Z)-octadecatrienoate + H(+). It carries out the reaction 1,3-di-(9Z)-octadecenoyl-2-hexadecanoylglycerol + H2O = 2-hexadecanoyl-3-(9Z)-octadecenoyl-sn-glycerol + (9Z)-octadecenoate + H(+). The enzyme catalyses 1-hexadecanoyl-2,3-di-(9Z)-octadecenoyl-sn-glycerol + H2O = 2,3-di-(9Z)-octadecenoyl-sn-glycerol + hexadecanoate + H(+). The catalysed reaction is 1,2-di-(9Z)-octadecenoyl-3-hexadecanoyl-sn-glycerol + H2O = 2-(9Z-octadecenoyl)-3-hexadecanoyl-sn-glycerol + (9Z)-octadecenoate + H(+). It catalyses the reaction a 1,2-diacyl-sn-glycero-3-phosphocholine + H2O = a 1-acyl-sn-glycero-3-phosphocholine + a fatty acid + H(+). It carries out the reaction 1,2,3-tri-(9Z-octadecenoyl)-glycerol + 9-hydroxy-octadecanoate = 9-(9Z-octadecenoyloxy)-octadecanoate + 2,3-di-(9Z)-octadecenoyl-sn-glycerol. The enzyme catalyses 1-hexadecanoyl-2,3-di-(9Z)-octadecenoyl-sn-glycerol + 9-hydroxy-octadecanoate = 9-hexadecanoyloxy-octadecanoate + 2,3-di-(9Z)-octadecenoyl-sn-glycerol. The catalysed reaction is 1,2,3-tri-(10Z)-heptadecenoylglycerol + 9-hydroxy-octadecanoate = 2,3-di-(10Z-heptadecenoyl)-sn-glycerol + 9-(10Z-heptadecenoyloxy)-octadecanoate. It catalyses the reaction 1,2,3-tri-(9Z,12Z)-octadecadienoylglycerol + 9-hydroxy-octadecanoate = 2,3-di-(9Z,12Z)-octadecadienoyl-sn-glycerol + 9-(9Z,12Z-octadecadienoyloxy)-octadecanoate. It carries out the reaction 1,2,3-tri-(9Z)-hexadecenoylglycerol + 9-hydroxy-octadecanoate = 2,3-di-(9Z)-hexadecenoyl-sn-glycerol + 9-(9Z-hexadecenoyloxy)-octadecanoate. The enzyme catalyses 9-hydroxy-octadecanoate + 1,2-di-(9Z-octadecenoyl)-sn-glycerol = 9-(9Z-octadecenoyloxy)-octadecanoate + 2-(9Z-octadecenoyl)-glycerol. The catalysed reaction is 1-hexadecanoyl-2,3-di-(9Z)-octadecenoyl-sn-glycerol + 9-hydroxy-octadecanoate = 1-hexadecanoyl-3-(9Z)-octadecenoyl-sn-glycerol + 9-(9Z-octadecenoyloxy)-octadecanoate. It functions in the pathway glycerolipid metabolism; triacylglycerol degradation. Functionally, catalyzes the initial step in triglyceride hydrolysis in adipocyte and non-adipocyte lipid droplets. Exhibits a strong preference for the hydrolysis of long-chain fatty acid esters at the sn-2 position of the glycerol backbone and acts coordinately with LIPE/HLS and DGAT2 within the lipolytic cascade. Also possesses acylglycerol transacylase and phospholipase A2 activities. Transfers fatty acid from triglyceride to retinol, hydrolyzes retinylesters, and generates 1,3-diacylglycerol from triglycerides. Regulates adiposome size and may be involved in the degradation of adiposomes. Catalyzes the formation of an ester bond between hydroxy fatty acids and fatty acids derived from triglycerides or diglycerides to generate fatty acid esters of hydroxy fatty acids (FAHFAs) in adipocytes. Acts antagonistically with LDAH in regulation of cellular lipid stores. Inhibits LDAH-stimulated lipid droplet fusion. May play an important role in energy homeostasis. May play a role in the response of the organism to starvation, enhancing hydrolysis of triglycerides and providing free fatty acids to other tissues to be oxidized in situations of energy depletion. The polypeptide is Patatin-like phospholipase domain-containing protein 2 (Rattus norvegicus (Rat)).